The primary structure comprises 217 residues: Adenylate kinase (217 aa).

12–17 contributes to the ATP binding site; that stretch reads GAGKGS. The segment at 32 to 61 is NMP; the sequence is STGDMFRTHIKGSTPLGLEAKKYTDQGLLV. AMP is bound by residues Thr-33, Arg-38, 59 to 61, 87 to 90, and Gln-94; these read LLV and GYPR. The tract at residues 128 to 165 is LID; sequence GRRTCPVCGAIYHVDNYPPKVAGICDNDGATLVQRKDD. Position 129 (Arg-129) interacts with ATP. The Zn(2+) site is built by Cys-132 and Cys-135. Residue 138–139 participates in ATP binding; that stretch reads IY. Zn(2+) contacts are provided by Cys-152 and Asp-155. Arg-162 and Arg-173 together coordinate AMP. Position 201 (Gln-201) interacts with ATP.

It belongs to the adenylate kinase family. Monomer.

Its subcellular location is the cytoplasm. The enzyme catalyses AMP + ATP = 2 ADP. It functions in the pathway purine metabolism; AMP biosynthesis via salvage pathway; AMP from ADP: step 1/1. Its function is as follows. Catalyzes the reversible transfer of the terminal phosphate group between ATP and AMP. Plays an important role in cellular energy homeostasis and in adenine nucleotide metabolism. This chain is Adenylate kinase, found in Acholeplasma laidlawii (strain PG-8A).